Here is a 442-residue protein sequence, read N- to C-terminus: UDP-N-acetylmuramate--L-alanine ligase (442 aa).

ATP is bound at residue 109-115 (GAHGKTS).

This sequence belongs to the MurCDEF family.

It is found in the cytoplasm. The enzyme catalyses UDP-N-acetyl-alpha-D-muramate + L-alanine + ATP = UDP-N-acetyl-alpha-D-muramoyl-L-alanine + ADP + phosphate + H(+). The protein operates within cell wall biogenesis; peptidoglycan biosynthesis. In terms of biological role, cell wall formation. In Streptococcus pyogenes serotype M2 (strain MGAS10270), this protein is UDP-N-acetylmuramate--L-alanine ligase.